Reading from the N-terminus, the 256-residue chain is Dihydroorotate dehydrogenase B (NAD(+)), electron transfer subunit (256 aa).

The 99-residue stretch at 2-100 (IRLETMKVVA…MGPQGNGFDL (99 aa)) folds into the FAD-binding FR-type domain. Residues 51–54 (RPIS), 68–70 (IYR), and 75–76 (GT) each bind FAD. [2Fe-2S] cluster-binding residues include Cys220, Cys225, Cys228, and Cys243.

It belongs to the PyrK family. As to quaternary structure, heterotetramer of 2 PyrK and 2 PyrD type B subunits. The cofactor is [2Fe-2S] cluster. Requires FAD as cofactor.

The protein operates within pyrimidine metabolism; UMP biosynthesis via de novo pathway; orotate from (S)-dihydroorotate (NAD(+) route): step 1/1. Functionally, responsible for channeling the electrons from the oxidation of dihydroorotate from the FMN redox center in the PyrD type B subunit to the ultimate electron acceptor NAD(+). In Streptococcus pneumoniae (strain ATCC BAA-255 / R6), this protein is Dihydroorotate dehydrogenase B (NAD(+)), electron transfer subunit.